The sequence spans 368 residues: Protein tesmin/TSO1-like CXC 8 (368 aa).

Residues 64–185 (KHKGCRCKQS…KCINCKNVSE (122 aa)) form the CRC domain.

Belongs to the lin-54 family.

It localises to the nucleus. Functionally, plays a role in development of both male and female reproductive tissues. This chain is Protein tesmin/TSO1-like CXC 8 (TCX8), found in Arabidopsis thaliana (Mouse-ear cress).